The sequence spans 165 residues: Large ribosomal subunit protein uL10 (165 aa).

N6-acetyllysine is present on residues Lys37 and Lys105.

This sequence belongs to the universal ribosomal protein uL10 family. In terms of assembly, part of the ribosomal stalk of the 50S ribosomal subunit. The N-terminus interacts with L11 and the large rRNA to form the base of the stalk. The C-terminus forms an elongated spine to which L12 dimers bind in a sequential fashion forming a multimeric L10(L12)X complex.

Its function is as follows. Protein L10 is also a translational repressor protein. It controls the translation of the rplJL-rpoBC operon by binding to its mRNA. In terms of biological role, forms part of the ribosomal stalk, playing a central role in the interaction of the ribosome with GTP-bound translation factors. In Escherichia coli O6:H1 (strain CFT073 / ATCC 700928 / UPEC), this protein is Large ribosomal subunit protein uL10 (rplJ).